Here is a 333-residue protein sequence, read N- to C-terminus: Lipoyl synthase (333 aa).

Positions 1-15 (MSTLVESPVPSNDSQ) are enriched in polar residues. The tract at residues 1-34 (MSTLVESPVPSNDSQAAAPAAYDPTQKQKSQAKT) is disordered. 7 residues coordinate [4Fe-4S] cluster: C80, C85, C91, C106, C110, C113, and S320. The region spanning 91–309 (CFGKGTATFM…EREAYAMGFT (219 aa)) is the Radical SAM core domain.

Belongs to the radical SAM superfamily. Lipoyl synthase family. It depends on [4Fe-4S] cluster as a cofactor.

The protein localises to the cytoplasm. The catalysed reaction is [[Fe-S] cluster scaffold protein carrying a second [4Fe-4S](2+) cluster] + N(6)-octanoyl-L-lysyl-[protein] + 2 oxidized [2Fe-2S]-[ferredoxin] + 2 S-adenosyl-L-methionine + 4 H(+) = [[Fe-S] cluster scaffold protein] + N(6)-[(R)-dihydrolipoyl]-L-lysyl-[protein] + 4 Fe(3+) + 2 hydrogen sulfide + 2 5'-deoxyadenosine + 2 L-methionine + 2 reduced [2Fe-2S]-[ferredoxin]. It functions in the pathway protein modification; protein lipoylation via endogenous pathway; protein N(6)-(lipoyl)lysine from octanoyl-[acyl-carrier-protein]: step 2/2. Catalyzes the radical-mediated insertion of two sulfur atoms into the C-6 and C-8 positions of the octanoyl moiety bound to the lipoyl domains of lipoate-dependent enzymes, thereby converting the octanoylated domains into lipoylated derivatives. In Bordetella bronchiseptica (strain ATCC BAA-588 / NCTC 13252 / RB50) (Alcaligenes bronchisepticus), this protein is Lipoyl synthase.